Here is a 230-residue protein sequence, read N- to C-terminus: MGQKVHPNGIRLGITKPWISTWYADKSDYASNLNSDWEVRKFLVEKLQAASVSKIVIERPAKSIRVTIHTARPGVVIGKKGEDVEVLRAAVSKLAGTPAQINIAEIRKPELDAKLVADSIAQQLERRVMFRRAMKRAVQNAMRIGAQGIKVQVSGRLGGAEIARDEWYREGRVPLHTLRADIDYSTSESHTQYGVIGVKVWIFKGEVLDGMLPQIEEPKQQQPKRKPRGK.

Positions valine 39–arginine 107 constitute a KH type-2 domain.

It belongs to the universal ribosomal protein uS3 family. In terms of assembly, part of the 30S ribosomal subunit. Forms a tight complex with proteins S10 and S14.

Its function is as follows. Binds the lower part of the 30S subunit head. Binds mRNA in the 70S ribosome, positioning it for translation. The sequence is that of Small ribosomal subunit protein uS3 from Shewanella baltica (strain OS223).